The chain runs to 310 residues: Protoheme IX farnesyltransferase (310 aa).

The next 9 membrane-spanning stretches (helical) occupy residues 21–43 (LLKPRVMSLVVFTALVGLLVAPV), 48–70 (MIALTGILFIALGAGASGALNMW), 95–115 (GEALGIGLALSGIAVVMLGLA), 118–138 (LFAAGLLAFTIFFYAVVYSMW), 147–167 (IVIGGAAGAFPPMIGWAVATG), 174–194 (LFMFALIFMWTPPHFWSLALF), 220–240 (VLVYSLLLAPLAVAGAFTGIG), 243–263 (LYLATALALNGWLLVGAVRIW), and 289–309 (LFLHFGAILAEAALKPYGLGG).

The protein belongs to the UbiA prenyltransferase family. Protoheme IX farnesyltransferase subfamily. Interacts with CtaA.

Its subcellular location is the cell inner membrane. The enzyme catalyses heme b + (2E,6E)-farnesyl diphosphate + H2O = Fe(II)-heme o + diphosphate. It participates in porphyrin-containing compound metabolism; heme O biosynthesis; heme O from protoheme: step 1/1. Converts heme B (protoheme IX) to heme O by substitution of the vinyl group on carbon 2 of heme B porphyrin ring with a hydroxyethyl farnesyl side group. The sequence is that of Protoheme IX farnesyltransferase from Cereibacter sphaeroides (strain KD131 / KCTC 12085) (Rhodobacter sphaeroides).